A 350-amino-acid chain; its full sequence is Histidinol-phosphate aminotransferase (350 aa).

Lys-220 carries the post-translational modification N6-(pyridoxal phosphate)lysine.

It belongs to the class-II pyridoxal-phosphate-dependent aminotransferase family. Histidinol-phosphate aminotransferase subfamily. As to quaternary structure, homodimer. Pyridoxal 5'-phosphate serves as cofactor.

It carries out the reaction L-histidinol phosphate + 2-oxoglutarate = 3-(imidazol-4-yl)-2-oxopropyl phosphate + L-glutamate. It participates in amino-acid biosynthesis; L-histidine biosynthesis; L-histidine from 5-phospho-alpha-D-ribose 1-diphosphate: step 7/9. The protein is Histidinol-phosphate aminotransferase of Macrococcus caseolyticus (strain JCSC5402) (Macrococcoides caseolyticum).